The chain runs to 54 residues: Large ribosomal subunit protein bL33 (54 aa).

This sequence belongs to the bacterial ribosomal protein bL33 family.

This Xylella fastidiosa (strain M23) protein is Large ribosomal subunit protein bL33.